The primary structure comprises 419 residues: Glutamyl-tRNA reductase (419 aa).

Residues 49-52 (TCNR), S107, 112-114 (EPQ), and Q118 contribute to the substrate site. C50 serves as the catalytic Nucleophile. Position 187–192 (187–192 (GAGETI)) interacts with NADP(+).

It belongs to the glutamyl-tRNA reductase family. As to quaternary structure, homodimer.

It carries out the reaction (S)-4-amino-5-oxopentanoate + tRNA(Glu) + NADP(+) = L-glutamyl-tRNA(Glu) + NADPH + H(+). It functions in the pathway porphyrin-containing compound metabolism; protoporphyrin-IX biosynthesis; 5-aminolevulinate from L-glutamyl-tRNA(Glu): step 1/2. Catalyzes the NADPH-dependent reduction of glutamyl-tRNA(Glu) to glutamate 1-semialdehyde (GSA). The sequence is that of Glutamyl-tRNA reductase from Vibrio vulnificus (strain CMCP6).